Reading from the N-terminus, the 236-residue chain is EF-hand domain-containing protein D1 (236 aa).

Positions methionine 1–alanine 48 are disordered. Residues glycine 28 to tryptophan 42 show a composition bias toward pro residues. EF-hand domains are found at residues arginine 87–proline 122 and glutamine 123–glycine 158. Residues aspartate 100, aspartate 104, glutamate 111, aspartate 136, aspartate 138, aspartate 140, lysine 142, and glutamate 147 each contribute to the Ca(2+) site.

The protein localises to the mitochondrion inner membrane. Functionally, acts as a calcium sensor for mitochondrial flash (mitoflash) activation, an event characterized by stochastic bursts of superoxide production. May play a role in neuronal differentiation. The sequence is that of EF-hand domain-containing protein D1 (EFHD1) from Bos taurus (Bovine).